The sequence spans 212 residues: ER lumen protein-retaining receptor 2 (212 aa).

The Lumenal portion of the chain corresponds to 1-4; it reads MNIF. Residues 5–24 traverse the membrane as a helical segment; it reads RLTGDLSHLAAIVILLLKIW. Residues 25 to 32 lie on the Cytoplasmic side of the membrane; the sequence is KTRSCAGI. Residues 33–52 traverse the membrane as a helical segment; that stretch reads SGKSQLLFALVFTTRYLDLF. Residues 47-48 form an interaction with the K-D-E-L motif on target proteins region; that stretch reads RY. At 53 to 58 the chain is on the lumenal side; sequence TSFISL. A helical membrane pass occupies residues 59-79; that stretch reads YNTSMKVIYLACSYATVYLIY. The Cytoplasmic segment spans residues 80–92; the sequence is LKFKATYDGNHDT. The chain crosses the membrane as a helical span at residues 93 to 110; the sequence is FRVEFLVVPVGGLSFLVN. Topologically, residues 111–116 are lumenal; the sequence is HDFSPL. The chain crosses the membrane as a helical span at residues 117–135; it reads EILWTFSIYLESVAILPQL. The Cytoplasmic segment spans residues 136-149; sequence FMISKTGEAETITT. A helical membrane pass occupies residues 150 to 168; that stretch reads HYLFFLGLYRALYLVNWIW. An interaction with the K-D-E-L motif on target proteins region spans residues 159-169; it reads RALYLVNWIWR. Residues 169-178 are Lumenal-facing; sequence RFYFEGFFDL. The chain crosses the membrane as a helical span at residues 179 to 199; sequence IAVVAGVVQTILYCDFFYLYI. Over 200-212 the chain is Cytoplasmic; sequence TKVLKGKKLSLPA. The tract at residues 204–207 is important for recycling of cargo proteins with the sequence motif K-D-E-L from the Golgi to the endoplasmic reticulum; sequence KGKK.

It belongs to the ERD2 family.

Its subcellular location is the endoplasmic reticulum membrane. The protein resides in the golgi apparatus membrane. It localises to the cytoplasmic vesicle. The protein localises to the COPI-coated vesicle membrane. Its function is as follows. Membrane receptor that binds the K-D-E-L sequence motif in the C-terminal part of endoplasmic reticulum resident proteins and maintains their localization in that compartment by participating to their vesicle-mediated recycling back from the Golgi. Binding is pH dependent, and is optimal at pH 5-5.4. The chain is ER lumen protein-retaining receptor 2 (KDELR2) from Homo sapiens (Human).